A 152-amino-acid polypeptide reads, in one-letter code: Plant UBX domain-containing protein 12 (152 aa).

The segment at Lys32–Glu61 is disordered. The 84-residue stretch at Asp67 to Thr150 folds into the UBX domain.

The polypeptide is Plant UBX domain-containing protein 12 (Arabidopsis thaliana (Mouse-ear cress)).